The following is an 883-amino-acid chain: MQKIMHISVLLSPVLWGLIFGVSSNSIQIGGLFPRGADQEYSAFRVGMVQFSTSEFRLTPHIDNLEVANSFAVTNAFCSQFSRGVYAIFGFYDKKSVNTITSFCGTLHVSFITPSFPTDGTHPFVIQMRPDLKGALLSLIEYYQWDKFAYLYDSDRGLSTLQAVLDSAAEKKWQVTAINVGNINNDKKDEMYRSLFQDLELKKERRVILDCERDKVNDIVDQVITIGKHVKGYHYIIANLGFTDGDLLKIQFGGANVSGFQIVDYDDSLVSKFIERWSTLEEKEYPGAHTTTIKYTSALTYDAVQVMTEAFRNLRKQRIEISRRGNAGDCLANPAVPWGQGVEIERALKQVQVEGLSGNIKFDQNGKRINYTINIMELKTNGPRKIGYWSEVDKMVVTLTELPSGNDTSGLENKTVVVTTILESPYVMMKKNHEMLEGNERYEGYCVDLAAEIAKHCGFKYKLTIVGDGKYGARDADTKIWNGMVGELVYGKADIAIAPLTITLVREEVIDFSKPFMSLGISIMIKKPQKSKPGVFSFLDPLAYEIWMCIVFAYIGVSVVLFLVSRFSPYEWHTEEFEDGRETQSSESTNEFGIFNSLWFSLGAFMQQGCDISPRSLSGRIVGGVWWFFTLIIISSYTANLAAFLTVERMVSPIESAEDLSKQTEIAYGTLDSGSTKEFFRRSKIAVFDKMWTYMRSAEPSVFVRTTAEGVARVRKSKGKYAYLLESTMNEYIEQRKPCDTMKVGGNLDSKGYGIATPKGSSLRNAVNLAVLKLNEQGLLDKLKNKWWYDKGECGSGGGDSKEKTSALSLSNVAGVFYILVGGLGLAMLVALIEFCYKSRAEAKRMKVAKNAQNINPSSSQNSQNFATYKEGYNVYGIESVKI.

A signal peptide spans 1–24 (MQKIMHISVLLSPVLWGLIFGVSS). Residues 25 to 543 (NSIQIGGLFP…GVFSFLDPLA (519 aa)) are Extracellular-facing. Cysteine 78 and cysteine 330 are oxidised to a cystine. 4 N-linked (GlcNAc...) asparagine glycosylation sites follow: asparagine 256, asparagine 370, asparagine 406, and asparagine 413. L-glutamate-binding residues include proline 499, threonine 501, and arginine 506. The chain crosses the membrane as a helical span at residues 544–564 (YEIWMCIVFAYIGVSVVLFLV). Topologically, residues 565–591 (SRFSPYEWHTEEFEDGRETQSSESTNE) are cytoplasmic. The segment at residues 592 to 607 (FGIFNSLWFSLGAFMQ) is an intramembrane region (helical; Pore-forming). An intramembrane segment occupies 608-610 (QGC). A lipid anchor (S-palmitoyl cysteine) is attached at cysteine 610. At 611-616 (DISPRS) the chain is on the cytoplasmic side. A helical transmembrane segment spans residues 617-637 (LSGRIVGGVWWFFTLIIISSY). Topologically, residues 638-812 (TANLAAFLTV…EKTSALSLSN (175 aa)) are extracellular. L-glutamate-binding residues include serine 675 and threonine 676. At serine 683 the chain carries Phosphoserine; by PKC. The residue at position 717 (serine 717) is a Phosphoserine; by PKG. An L-glutamate-binding site is contributed by glutamate 726. Cysteines 739 and 794 form a disulfide. A helical membrane pass occupies residues 813–833 (VAGVFYILVGGLGLAMLVALI). Residues 834 to 883 (EFCYKSRAEAKRMKVAKNAQNINPSSSQNSQNFATYKEGYNVYGIESVKI) lie on the Cytoplasmic side of the membrane. Cysteine 836 is lipidated: S-palmitoyl cysteine. Serine 860 and serine 863 each carry phosphoserine. A required for interaction with IQSEC1 region spans residues 867-877 (ATYKEGYNVYG). Tyrosine 876 carries the phosphotyrosine modification. Serine 880 carries the post-translational modification Phosphoserine.

It belongs to the glutamate-gated ion channel (TC 1.A.10.1) family. GRIA2 subfamily. As to quaternary structure, homotetramer or heterotetramer of pore-forming glutamate receptor subunits. Tetramers may be formed by the dimerization of dimers. May interact with MPP4. Forms a ternary complex with GRIP1 and CSPG4. Interacts with ATAD1 in an ATP-dependent manner. ATAD1-catalyzed ATP hydrolysis disrupts binding to ATAD1 and to GRIP1 and leads to AMPAR complex disassembly. Interacts with GRIP1 and GRIP2. Interacts with NSF via its C-terminus. Isoform 1, but not isoform 3, interacts with PICK1. Interacts with CACNG2. Interacts with GRIA1 and SYNDIG1. Part of a complex containing GRIA2, NSF and NAPA and/or NAPB. Interacts with SNX27 (via PDZ domain); the interaction is required for recycling to the plasma membrane when endocytosed and prevent degradation in lysosomes. Interacts with LRFN1. Found in a complex with GRIA1, GRIA3, GRIA4, CNIH2, CNIH3, CACNG2, CACNG3, CACNG4, CACNG5, CACNG7 and CACNG8. Interacts with CACNG5. Interacts with OLFM2. Interacts with AP4B1, AP4E1 and AP4M1; probably indirect it mediates the somatodendritic localization of GRIA2 in neurons. Forms a complex with GRIP1, NSG1 and STX12; controls the intracellular fate of AMPAR and the endosomal sorting of the GRIA2 subunit toward recycling and membrane targeting. Interacts with IQSEC1; the interaction is required for ARF6 activation. Interacts (heterotetramer form) with CNIH2 and CNIH3; this interaction promotes expression at the plasma membrane and extensively modulates their gating properties by slowing deactivation and desensitization kinetics. In terms of processing, palmitoylated. Depalmitoylated upon L-glutamate stimulation. Cys-610 palmitoylation leads to Golgi retention and decreased cell surface expression. In contrast, Cys-836 palmitoylation does not affect cell surface expression but regulates stimulation-dependent endocytosis. Ubiquitinated by RNF167, leading to its degradation. Post-translationally, phosphorylation at Tyr-876 is required for interaction with IQSEC1 and ARF6 activation, which in turn triggers AMPAR internalization for persistent synaptic depression. In terms of processing, N-glycosylated.

The protein localises to the cell membrane. The protein resides in the postsynaptic cell membrane. It is found in the postsynaptic density membrane. The enzyme catalyses Ca(2+)(in) = Ca(2+)(out). It catalyses the reaction Na(+)(in) = Na(+)(out). In terms of biological role, ionotropic glutamate receptor that functions as a ligand-gated cation channel, gated by L-glutamate and glutamatergic agonists such as alpha-amino-3-hydroxy-5-methyl-4-isoxazolepropionic acid (AMPA), quisqualic acid, and kainic acid. L-glutamate acts as an excitatory neurotransmitter at many synapses in the central nervous system and plays an important role in fast excitatory synaptic transmission. Binding of the excitatory neurotransmitter L-glutamate induces a conformation change, leading to the opening of the cation channel, and thereby converts the chemical signal to an electrical impulse upon entry of monovalent and divalent cations such as sodium and calcium. The receptor then desensitizes rapidly and enters in a transient inactive state, characterized by the presence of bound agonist. In the presence of CACNG4 or CACNG7 or CACNG8, shows resensitization which is characterized by a delayed accumulation of current flux upon continued application of L-glutamate. Through complex formation with NSG1, GRIP1 and STX12 controls the intracellular fate of AMPAR and the endosomal sorting of the GRIA2 subunit toward recycling and membrane targeting. This Homo sapiens (Human) protein is Glutamate receptor 2.